The sequence spans 469 residues: Carboxypeptidase Q (469 aa).

Residues 1–19 (MKTLILTLLSLYELQLCCG) form the signal peptide. Residues 20-42 (AYNQNIRSQRKFEMIKTEISSYK) constitute a propeptide that is removed on maturation. N-linked (GlcNAc...) asparagine glycosylation is found at N59 and N159. The Zn(2+) site is built by H288 and D300. E334 acts as the Nucleophile in catalysis. E335 provides a ligand contact to Zn(2+). N351 carries N-linked (GlcNAc...) asparagine glycosylation. D362 provides a ligand contact to Zn(2+). A glycan (N-linked (GlcNAc...) asparagine) is linked at N394. Position 432 (H432) interacts with Zn(2+).

The protein belongs to the peptidase M28 family. In terms of assembly, homodimer. The monomeric form is inactive while the homodimer is active.

It is found in the endoplasmic reticulum. The protein resides in the golgi apparatus. It localises to the lysosome. The protein localises to the secreted. Its function is as follows. Carboxypeptidase that may play an important role in the hydrolysis of circulating peptides. Catalyzes more efficiently the hydrolysis of dipeptides with unsubstituted terminals into amino acids. This is Carboxypeptidase Q (cpq) from Xenopus laevis (African clawed frog).